Consider the following 648-residue polypeptide: Chaperone protein HtpG (648 aa).

The a; substrate-binding stretch occupies residues 1 to 353; the sequence is MNARVEQLEF…AQDMSLNVSR (353 aa). Residues 354–567 are b; sequence EILQQDRQIK…TFGITPALAR (214 aa). Residues 568-648 form a c region; the sequence is IYRATGQDVP…LLADRLTRTL (81 aa).

The protein belongs to the heat shock protein 90 family. As to quaternary structure, homodimer.

The protein localises to the cytoplasm. Its function is as follows. Molecular chaperone. Has ATPase activity. The sequence is that of Chaperone protein HtpG from Mycobacterium ulcerans (strain Agy99).